A 273-amino-acid polypeptide reads, in one-letter code: 3-methyl-2-oxobutanoate hydroxymethyltransferase 3 (273 aa).

The Mg(2+) site is built by D49 and D88. Residues 49-50 (DS), D88, and K118 each bind 3-methyl-2-oxobutanoate. E120 is a binding site for Mg(2+). Residue E187 is the Proton acceptor of the active site.

Belongs to the PanB family. As to quaternary structure, homodecamer; pentamer of dimers. Mg(2+) is required as a cofactor.

Its subcellular location is the cytoplasm. The catalysed reaction is 3-methyl-2-oxobutanoate + (6R)-5,10-methylene-5,6,7,8-tetrahydrofolate + H2O = 2-dehydropantoate + (6S)-5,6,7,8-tetrahydrofolate. It participates in cofactor biosynthesis; (R)-pantothenate biosynthesis; (R)-pantoate from 3-methyl-2-oxobutanoate: step 1/2. Its function is as follows. Catalyzes the reversible reaction in which hydroxymethyl group from 5,10-methylenetetrahydrofolate is transferred onto alpha-ketoisovalerate to form ketopantoate. The chain is 3-methyl-2-oxobutanoate hydroxymethyltransferase 3 from Bradyrhizobium diazoefficiens (strain JCM 10833 / BCRC 13528 / IAM 13628 / NBRC 14792 / USDA 110).